The following is a 170-amino-acid chain: Protein AIG2 A (170 aa).

Residue 15 to 20 (YGSFQE) coordinates substrate. Catalysis depends on glutamate 83, which acts as the Proton acceptor. Residues 147-162 (KNPNGRSREEFEKFVQ) show a composition bias toward basic and acidic residues. The interval 147–170 (KNPNGRSREEFEKFVQDDSSPASA) is disordered.

Belongs to the gamma-glutamylcyclotransferase family. Ubiquitous.

Functionally, putative gamma-glutamylcyclotransferase. The chain is Protein AIG2 A from Arabidopsis thaliana (Mouse-ear cress).